The sequence spans 206 residues: 2,3-bisphosphoglycerate-dependent phosphoglycerate mutase (206 aa).

Residues 9–16, 22–23, R61, 88–91, K99, 115–116, and 159–160 each bind substrate; these read RHGQSEWN, TG, ERDY, RR, and GN. H10 (tele-phosphohistidine intermediate) is an active-site residue. E88 acts as the Proton donor/acceptor in catalysis.

This sequence belongs to the phosphoglycerate mutase family. BPG-dependent PGAM subfamily. Homodimer.

The enzyme catalyses (2R)-2-phosphoglycerate = (2R)-3-phosphoglycerate. It participates in carbohydrate degradation; glycolysis; pyruvate from D-glyceraldehyde 3-phosphate: step 3/5. Its function is as follows. Catalyzes the interconversion of 2-phosphoglycerate and 3-phosphoglycerate. This is 2,3-bisphosphoglycerate-dependent phosphoglycerate mutase from Brucella anthropi (strain ATCC 49188 / DSM 6882 / CCUG 24695 / JCM 21032 / LMG 3331 / NBRC 15819 / NCTC 12168 / Alc 37) (Ochrobactrum anthropi).